The chain runs to 90 residues: Acylphosphatase (90 aa).

Residues 4-90 (RMYVKVYGIV…KGEFNNFDTY (87 aa)) enclose the Acylphosphatase-like domain. Residues arginine 19 and asparagine 37 contribute to the active site.

It belongs to the acylphosphatase family.

It carries out the reaction an acyl phosphate + H2O = a carboxylate + phosphate + H(+). In Sulfurisphaera tokodaii (strain DSM 16993 / JCM 10545 / NBRC 100140 / 7) (Sulfolobus tokodaii), this protein is Acylphosphatase (acyP).